The primary structure comprises 81 residues: U-megalopygitoxin(3)-Mo4 (81 aa).

The N-terminal stretch at 1–20 is a signal peptide; sequence MNSKFVLIVVFLAVVSICFA.

It belongs to the caterpillar 3 family. Post-translationally, contains 3 disulfide bonds. Expressed by the venom apparatus.

The protein resides in the secreted. Functionally, probable toxin. This Megalopyge opercularis (Southern flannel moth) protein is U-megalopygitoxin(3)-Mo4.